We begin with the raw amino-acid sequence, 360 residues long: DNA replication and repair protein RecF (360 aa).

Residue 30 to 37 participates in ATP binding; that stretch reads GHNGSGKT.

Belongs to the RecF family.

It localises to the cytoplasm. In terms of biological role, the RecF protein is involved in DNA metabolism; it is required for DNA replication and normal SOS inducibility. RecF binds preferentially to single-stranded, linear DNA. It also seems to bind ATP. This chain is DNA replication and repair protein RecF, found in Actinobacillus pleuropneumoniae serotype 5b (strain L20).